We begin with the raw amino-acid sequence, 374 residues long: UDP-N-acetylglucosamine--N-acetylmuramyl-(pentapeptide) pyrophosphoryl-undecaprenol N-acetylglucosamine transferase (374 aa).

UDP-N-acetyl-alpha-D-glucosamine-binding positions include 13–15 (TGG), Asn124, Arg165, Ser193, and Gln294.

Belongs to the glycosyltransferase 28 family. MurG subfamily.

The protein resides in the cell inner membrane. The enzyme catalyses di-trans,octa-cis-undecaprenyl diphospho-N-acetyl-alpha-D-muramoyl-L-alanyl-D-glutamyl-meso-2,6-diaminopimeloyl-D-alanyl-D-alanine + UDP-N-acetyl-alpha-D-glucosamine = di-trans,octa-cis-undecaprenyl diphospho-[N-acetyl-alpha-D-glucosaminyl-(1-&gt;4)]-N-acetyl-alpha-D-muramoyl-L-alanyl-D-glutamyl-meso-2,6-diaminopimeloyl-D-alanyl-D-alanine + UDP + H(+). It functions in the pathway cell wall biogenesis; peptidoglycan biosynthesis. Cell wall formation. Catalyzes the transfer of a GlcNAc subunit on undecaprenyl-pyrophosphoryl-MurNAc-pentapeptide (lipid intermediate I) to form undecaprenyl-pyrophosphoryl-MurNAc-(pentapeptide)GlcNAc (lipid intermediate II). In Rhizobium rhizogenes (strain K84 / ATCC BAA-868) (Agrobacterium radiobacter), this protein is UDP-N-acetylglucosamine--N-acetylmuramyl-(pentapeptide) pyrophosphoryl-undecaprenol N-acetylglucosamine transferase.